Here is a 203-residue protein sequence, read N- to C-terminus: Small ribosomal subunit protein uS4 (203 aa).

Residues 93-154 form the S4 RNA-binding domain; sequence RRLDNVVYRC…KSRNLDAVAD (62 aa).

It belongs to the universal ribosomal protein uS4 family. Part of the 30S ribosomal subunit. Contacts protein S5. The interaction surface between S4 and S5 is involved in control of translational fidelity.

Its function is as follows. One of the primary rRNA binding proteins, it binds directly to 16S rRNA where it nucleates assembly of the body of the 30S subunit. Functionally, with S5 and S12 plays an important role in translational accuracy. The sequence is that of Small ribosomal subunit protein uS4 from Chlorobaculum tepidum (strain ATCC 49652 / DSM 12025 / NBRC 103806 / TLS) (Chlorobium tepidum).